We begin with the raw amino-acid sequence, 536 residues long: ADP,ATP carrier protein 4 (536 aa).

The next 9 membrane-spanning stretches (helical) occupy residues 44 to 64, 77 to 97, 109 to 129, 172 to 194, 205 to 225, 244 to 264, 309 to 329, 349 to 369, and 378 to 398; these read VLLF…LYVL, SILF…IVIV, MLEV…FVIW, TMLY…FSRA, KFLP…GLLT, FSQV…TSFF, VVAA…GIVL, AQII…THLI, and AITA…MVFF. Residues asparagine 400 and asparagine 421 are each glycosylated (N-linked (GlcNAc...) asparagine). 2 helical membrane-spanning segments follow: residues 465 to 485 and 493 to 513; these read LGIN…TVVF and VVSV…RSIL.

The protein belongs to the ADP/ATP translocase tlc family.

It localises to the cell membrane. ATP transporter involved in the uptake of ATP from the host cell cytoplasm. Provides the microsporidian cell with host ATP in exchange for ADP. This is an obligate exchange system. This energy acquiring activity is an important component of microsporidian parasitism. This chain is ADP,ATP carrier protein 4 (NTT4), found in Encephalitozoon cuniculi (strain GB-M1) (Microsporidian parasite).